Consider the following 399-residue polypeptide: Elongation factor Tu (399 aa).

In terms of domain architecture, tr-type G spans 10–209 (KPHVNIGTIG…AVDSYIPTPV (200 aa)). The interval 19–26 (GHVDHGKT) is G1. 19-26 (GHVDHGKT) contacts GTP. Threonine 26 serves as a coordination point for Mg(2+). The G2 stretch occupies residues 60–64 (GITIA). The tract at residues 81 to 84 (DCPG) is G3. GTP-binding positions include 81-85 (DCPGH) and 136-139 (NKAD). The G4 stretch occupies residues 136–139 (NKAD). Residues 174-176 (SAL) form a G5 region.

It belongs to the TRAFAC class translation factor GTPase superfamily. Classic translation factor GTPase family. EF-Tu/EF-1A subfamily. Monomer.

It is found in the cytoplasm. It carries out the reaction GTP + H2O = GDP + phosphate + H(+). In terms of biological role, GTP hydrolase that promotes the GTP-dependent binding of aminoacyl-tRNA to the A-site of ribosomes during protein biosynthesis. The polypeptide is Elongation factor Tu (Campylobacter concisus (strain 13826)).